The sequence spans 645 residues: Protein LHY (645 aa).

The residue at position 6 (Ser-6) is a Phosphoserine. An HTH myb-type domain is found at 19-73 (TITKQRERWTEDEHERFLEALRLYGRAWQRIEEHIGTKTAVQIRSHAQKFFTKLE). The segment at residues 46–69 (WQRIEEHIGTKTAVQIRSHAQKFF) is a DNA-binding region (H-T-H motif). 4 disordered regions span residues 89-127 (IEIP…AKLV), 149-212 (EKTS…GTTV), 410-437 (QNLA…ADSK), and 458-500 (AQKK…TDEN). Polar residues predominate over residues 110 to 120 (NNGTSSSQVSS). Basic and acidic residues predominate over residues 149–158 (EKTSTGKENQ). The span at 159–169 (DENCSGVSTVN) shows a compositional bias: polar residues. A compositionally biased stretch (basic and acidic residues) spans 197 to 207 (VPKKNKDKDGN). Polar residues predominate over residues 468 to 478 (SCGSNTPSGSD). The span at 483–498 (ALDKMEKDKEDVKETD) shows a compositional bias: basic and acidic residues.

As to quaternary structure, homodimer or heterodimer with CCA1. Interacts with CCA1 (via internal domain); independently of photoperiod. Functions probably as part of a large complex. Interacts with CKB1 and CKB3. Interacts with LNK1 and LNK2. Post-translationally, phosphorylated by CK2. In terms of tissue distribution, expressed in leaves, roots, stems, flowers and siliques.

It localises to the nucleus. Transcription factor involved in the circadian clock. Binds to the promoter region of APRR1/TOC1 and TCP21/CHE to repress their transcription. Represses both CCA1 and itself. May recognize the promoter of JMJ14 to regulates its expression during the night in a circadian manner. This Arabidopsis thaliana (Mouse-ear cress) protein is Protein LHY.